Consider the following 113-residue polypeptide: Large ribosomal subunit protein eL31 (113 aa).

This sequence belongs to the eukaryotic ribosomal protein eL31 family. As to quaternary structure, component of the large ribosomal subunit (LSU). Mature yeast ribosomes consist of a small (40S) and a large (60S) subunit. The 40S small subunit contains 1 molecule of ribosomal RNA (18S rRNA) and at least 33 different proteins. The large 60S subunit contains 3 rRNA molecules (25S, 5.8S and 5S rRNA) and at least 46 different proteins.

It localises to the cytoplasm. Its function is as follows. Component of the ribosome, a large ribonucleoprotein complex responsible for the synthesis of proteins in the cell. The small ribosomal subunit (SSU) binds messenger RNAs (mRNAs) and translates the encoded message by selecting cognate aminoacyl-transfer RNA (tRNA) molecules. The large subunit (LSU) contains the ribosomal catalytic site termed the peptidyl transferase center (PTC), which catalyzes the formation of peptide bonds, thereby polymerizing the amino acids delivered by tRNAs into a polypeptide chain. The nascent polypeptides leave the ribosome through a tunnel in the LSU and interact with protein factors that function in enzymatic processing, targeting, and the membrane insertion of nascent chains at the exit of the ribosomal tunnel. This Schizosaccharomyces pombe (strain 972 / ATCC 24843) (Fission yeast) protein is Large ribosomal subunit protein eL31 (rpl31).